The primary structure comprises 201 residues: Dephospho-CoA kinase (201 aa).

Residues 4–201 form the DPCK domain; sequence IIGITGGIAS…LEGGRQDDRD (198 aa). Residue 12 to 17 participates in ATP binding; that stretch reads ASGKST.

This sequence belongs to the CoaE family.

It is found in the cytoplasm. The catalysed reaction is 3'-dephospho-CoA + ATP = ADP + CoA + H(+). Its pathway is cofactor biosynthesis; coenzyme A biosynthesis; CoA from (R)-pantothenate: step 5/5. Functionally, catalyzes the phosphorylation of the 3'-hydroxyl group of dephosphocoenzyme A to form coenzyme A. This chain is Dephospho-CoA kinase, found in Streptococcus pneumoniae (strain ATCC BAA-255 / R6).